A 314-amino-acid polypeptide reads, in one-letter code: tRNA dimethylallyltransferase (314 aa).

Position 9–16 (9–16 (GPTAVGKT)) interacts with ATP. Residue 11 to 16 (TAVGKT) participates in substrate binding. Residues 34 to 37 (DSVQ) are interaction with substrate tRNA.

The protein belongs to the IPP transferase family. In terms of assembly, monomer. It depends on Mg(2+) as a cofactor.

It carries out the reaction adenosine(37) in tRNA + dimethylallyl diphosphate = N(6)-dimethylallyladenosine(37) in tRNA + diphosphate. Catalyzes the transfer of a dimethylallyl group onto the adenine at position 37 in tRNAs that read codons beginning with uridine, leading to the formation of N6-(dimethylallyl)adenosine (i(6)A). The polypeptide is tRNA dimethylallyltransferase (Desulfitobacterium hafniense (strain Y51)).